We begin with the raw amino-acid sequence, 334 residues long: Leukocyte cell-derived chemotaxin 1 (334 aa).

A helical transmembrane segment spans residues 45–65 (VVLISGAVLLLFGAIGAFYFW). Residues 104–201 (GSGAEEAIAV…LCGDLPIFWL (98 aa)) form the BRICHOS domain. A disulfide bond links C131 and C193. A propeptide spanning residues 211–214 (RERR) is cleaved from the precursor. Residues 218–268 (RKIVPTTTKRPHSGPRSNPGAGRLNNETRPSVQEDSQAFNPDNPYHQQEGE) are disordered. A compositionally biased stretch (polar residues) spans 242 to 257 (NNETRPSVQEDSQAFN). N243 carries an N-linked (GlcNAc...) asparagine glycan. 4 disulfide bridges follow: C282-C286, C283-C323, C293-C317, and C297-C313.

It belongs to the chondromodulin-1 family. In terms of processing, after cleavage, the post-translationally modified ChM-I is secreted as a glycoprotein. As to expression, detected in cartilage and cardiac valves (at protein level). Detected in the laminae fibrosa, spongiosa and ventricularis layers of normal cardiac valves (at protein level). Expression is decreased cardiac valves of patients with valvular heart disease (at protein level). Weakly expressed in chondrosarcoma.

Its subcellular location is the secreted. It localises to the extracellular space. It is found in the extracellular matrix. The protein resides in the endomembrane system. In terms of biological role, bifunctional growth regulator that stimulates the growth of cultured chondrocytes in the presence of basic fibroblast growth factor (FGF) but inhibits the growth of cultured vascular endothelial cells. May contribute to the rapid growth of cartilage and vascular invasion prior to the replacement of cartilage by bone during endochondral bone development. Inhibits in vitro tube formation and mobilization of endothelial cells. Plays a role as antiangiogenic factor in cardiac valves to suppress neovascularization. The polypeptide is Leukocyte cell-derived chemotaxin 1 (Homo sapiens (Human)).